The sequence spans 419 residues: MSSIETYMQSVGEQARTASRAMMRATGAAKNQALLAMAEAILAQRAELQAANAKDVAAARANGLEAALLDRLTLSDRSIALMAEGLRQIAALPDPVGSITATSVRPNGMRVAQMRVPLGVIGIIYESRPNVTIDAAALCLKSGNATILRGGSEALHSNVALGRIVQAGLQAAGLPTAAVQVIDTTDRAAVGKLVTMTEHVDVIVPRGGKGLISRLAQEARVPLIKHLDGNCHVYVDAAADLAKAHDIAFNAKTYRYGVCGAMETLLVHADVAQRLLPVLGQALHEHGVELRGCARALQWLPEGKPADDADWATEYLGPVLAVRVVDTIDEAMDHIARWGSGHTDAIVTENLSAAQRFQREVDSSSVYVNLPTCFADGFEYGLGAEIGISTNRLHARGPVGLEGLTTLKWVLNGEGQVRG.

This sequence belongs to the gamma-glutamyl phosphate reductase family.

The protein resides in the cytoplasm. The enzyme catalyses L-glutamate 5-semialdehyde + phosphate + NADP(+) = L-glutamyl 5-phosphate + NADPH + H(+). It functions in the pathway amino-acid biosynthesis; L-proline biosynthesis; L-glutamate 5-semialdehyde from L-glutamate: step 2/2. Catalyzes the NADPH-dependent reduction of L-glutamate 5-phosphate into L-glutamate 5-semialdehyde and phosphate. The product spontaneously undergoes cyclization to form 1-pyrroline-5-carboxylate. The polypeptide is Gamma-glutamyl phosphate reductase (Bordetella bronchiseptica (strain ATCC BAA-588 / NCTC 13252 / RB50) (Alcaligenes bronchisepticus)).